A 304-amino-acid polypeptide reads, in one-letter code: NADH-cytochrome b5 reductase 2 (304 aa).

The chain crosses the membrane as a helical span at residues 9-29; it reads MLVALAVIGVTVLLFLIKALG. The region spanning 43-155 is the FAD-binding FR-type domain; the sequence is NAKYPLPLIE…RGPNGLLVYK (113 aa). FAD contacts are provided by residues 135-150 and 174-209; these read DSLKIGETIDFRGPNG and VAKHVGMLAGGTGITPMLQLIRQITQDPNDNTKCSL.

This sequence belongs to the flavoprotein pyridine nucleotide cytochrome reductase family. The cofactor is FAD.

It localises to the membrane. The catalysed reaction is 2 Fe(III)-[cytochrome b5] + NADH = 2 Fe(II)-[cytochrome b5] + NAD(+) + H(+). In terms of biological role, NADH-cytochrome b5 reductases are involved in desaturation and elongation of fatty acids, cholesterol biosynthesis and drug metabolism. The polypeptide is NADH-cytochrome b5 reductase 2 (cyb5r2) (Xenopus tropicalis (Western clawed frog)).